The sequence spans 377 residues: Iris (377 aa).

2 N-linked (GlcNAc...) asparagine glycosylation sites follow: N11 and N226.

This sequence belongs to the serpin family. As to expression, female saliva (at protein level). Female salivary gland (at protein level).

The protein resides in the secreted. In terms of biological role, serine protease inhibitor with anticoagulant and immunosuppressive properties that can modulate blood feeding of ticks on vertebrate species. Strongly inhibits human leukocyte elastase (ELANE) and porcine pancreatic elastase. Moderately inhibits human tPA/tissue-type plasminogen activator (PLAT), coagulation factor Xa (F10), thrombin (F2) and trypsin. Does not inhibit human plasmin (PLG). Inhibits platelet aggregation. Inhibits the intrinsic pathway of blood coagulation in the host. Inhibits fibrinolysis in the host. Inhibits proliferation of mouse splenocytes. Decreases the number of IFN-gamma (IFNG)-producing human peripheral blood mononuclear cells (PBMCs) after stimulation with phytohemagglutinin A (PHA). Increases the number of IL10-producing human PBMCs after stimulation with lipopolysaccharides (LPS) with no significant effect on IL10 production. Inhibits production of IFNG, IL6, TNF-alpha (TNF) and CXCL8 by human PBMCs. Binds to monocyte/macrophage subpopulation of the host PBMCs. Increases both survival rate and survival time in mice with LPS-induced endotoxemic shock. The chain is Iris from Ixodes ricinus (Common tick).